We begin with the raw amino-acid sequence, 348 residues long: Acetylesterase (348 aa).

A signal peptide spans M1–A16. Residues N64, N165, N218, N223, and N297 are each glycosylated (N-linked (GlcNAc...) asparagine).

It belongs to the carbohydrate esterase CE16 family. Post-translationally, N-glycosylated.

It localises to the secreted. The enzyme catalyses an acetyl ester + H2O = an aliphatic alcohol + acetate + H(+). In terms of biological role, acetylesterase that acts as an exo-deacetylase. Shows activity towards naphtyl acetate, triacetin, as well as towards glucose- and xylose acetates. Liberates acetic acid from xylo-oligomers. The protein is Acetylesterase of Hypocrea jecorina (Trichoderma reesei).